We begin with the raw amino-acid sequence, 213 residues long: Oxidase ustYa (213 aa).

The interval 1–26 (MAERSSNGYKEVPVRQSEESTIAEEE) is disordered. The chain crosses the membrane as a helical span at residues 48-68 (AVWFLIALLLLSNIGLLGGLI). Asparagine 98 carries an N-linked (GlcNAc...) asparagine glycan. Short sequence motifs (HXXHC) lie at residues 123–127 (HQLHC) and 150–154 (HLMHC).

The protein belongs to the ustYa family.

The protein resides in the membrane. Its pathway is mycotoxin biosynthesis. Functionally, oxidase; part of the gene cluster that mediates the biosynthesis of the secondary metabolite ustiloxin B, an antimitotic tetrapeptide. First, ustA is processed by the subtilisin-like endoprotease Kex2 that is outside the ustiloxin B gene cluster, at the C-terminal side of Arg-Lys, after transfer to Golgi apparatus through the endoplasmic reticulum (ER). Cleavage by KEX2 generates 16 peptides YAIG-I to YAIG-XVI. To process the precursor peptide further, at least two peptidases are necessary to cleave the N-terminal and C-terminal sides of the Tyr-Ala-Ile-Gly core peptide which serves as backbone for the synthesis of ustiloxin B, through cyclization and modification of the tyrosine with a non-protein coding amino acid, norvaline. One of the two peptidases must be the serine peptidase ustP; and the other pepdidase is probably ustH. Macrocyclization of the core peptide derived from ustA requires the tyrosinase ustQ, as well as the homologous oxidases ustYa and ustYb, and leads to the production of the first cyclization product N-desmethylustiloxin F. For the formation of N-desmethylustiloxin F, three oxidation steps are required, hydroxylation at the benzylic position, hydroxylation at either the aromatic ring of Tyr or beta-position of Ile, and oxidative cyclization. UstQ may catalyze the oxidation of a phenol moiety, whereas the ustYa and ustYb are most likely responsible for the remaining two-step oxidations. N-desmethylustiloxin F is then methylated by ustM to yield ustiloxin F which in turn substrate of the cytochrome P450 monooxygenase ustC which catalyzes the formation of S-deoxyustiloxin H. The flavoprotein monooxygenases ustF1 and ustF2 then participate in the modification of the side chain of S-deoxyustiloxin H, leading to the synthesis of an oxime intermediate, via ustiloxin H. Finally, carboxylative dehydration performed by the cysteine desulfurase-like protein ustD yields ustiloxin B. The chain is Oxidase ustYa from Aspergillus flavus (strain ATCC 200026 / FGSC A1120 / IAM 13836 / NRRL 3357 / JCM 12722 / SRRC 167).